Consider the following 244-residue polypeptide: Small ribosomal subunit protein eS4 (244 aa).

The S4 RNA-binding domain maps to leucine 43–glutamate 106.

It belongs to the eukaryotic ribosomal protein eS4 family.

This is Small ribosomal subunit protein eS4 from Methanococcus maripaludis (strain C7 / ATCC BAA-1331).